A 300-amino-acid chain; its full sequence is GTPase Era (300 aa).

Positions 4–173 (KYGIVAIVGK…INTIKQYLHK (170 aa)) constitute an Era-type G domain. Positions 12-19 (GKPNVGKS) are G1. 12–19 (GKPNVGKS) serves as a coordination point for GTP. The segment at 38-42 (QTTRN) is G2. The G3 stretch occupies residues 59–62 (DTPG). GTP contacts are provided by residues 59–63 (DTPGF) and 122–125 (SKAE). The interval 122-125 (SKAE) is G4. A G5 region spans residues 152-154 (ISA). A KH type-2 domain is found at 204 to 282 (LNHEVPHGVG…SLTIFVKVEN (79 aa)).

It belongs to the TRAFAC class TrmE-Era-EngA-EngB-Septin-like GTPase superfamily. Era GTPase family. Monomer.

It localises to the cytoplasm. Its subcellular location is the cell membrane. An essential GTPase that binds both GDP and GTP, with rapid nucleotide exchange. Plays a role in 16S rRNA processing and 30S ribosomal subunit biogenesis and possibly also in cell cycle regulation and energy metabolism. In Ureaplasma urealyticum serovar 10 (strain ATCC 33699 / Western), this protein is GTPase Era.